Here is a 1014-residue protein sequence, read N- to C-terminus: Nebulette (1014 aa).

Residues Met-1–Glu-24 form a disordered region. The span at Ile-9 to Glu-24 shows a compositional bias: acidic residues. 23 Nebulin repeats span residues Phe-29–Asp-63, Lys-64–Asn-99, Ser-100–Phe-136, Ser-137–Thr-172, Tyr-173–Asn-205, Lys-206–Asp-241, Lys-242–Asp-278, Pro-279–Gly-313, Met-314–Gly-348, Lys-349–Gly-385, Arg-386–Gly-422, Lys-423–Gly-459, Lys-460–Gly-496, Lys-497–Gly-533, Lys-534–Ser-569, Asn-570–Val-599, Gly-600–Ala-635, Ile-636–Pro-666, Val-667–Gln-693, Arg-694–Thr-728, Leu-729–Gly-759, Arg-760–Gly-794, and Arg-795–Glu-830. Asp-96 carries the omega-N-methylarginine modification. Arg-795 is subject to Omega-N-methylarginine. The interval Gly-836–Ser-953 is linker. The region spanning Pro-954–Asn-1014 is the SH3 domain.

In terms of assembly, interacts (via nebulin repeats 1-5) with DESM (via rod region). Interacts (via SH3 domain) with XIRP2. Interacts with ZYX/Zyxin. In terms of tissue distribution, abundantly expressed in cardiac muscle, but not in skeletal or smooth muscle. Localized to Z-lines in cardiac cells and to dense bodies in nonmuscle cells. Isoform 2 is expressed in non-muscle cells such as in fibroblasts.

The protein localises to the cytoplasm. In terms of biological role, binds to actin and plays an important role in the assembly of the Z-disk. May functionally link sarcomeric actin to the desmin intermediate filaments in the heart muscle sarcomeres. Its function is as follows. May play a role in the assembly of focal adhesions. In Homo sapiens (Human), this protein is Nebulette.